A 191-amino-acid polypeptide reads, in one-letter code: Peptidyl-tRNA hydrolase (191 aa).

Tyrosine 16 contacts tRNA. Histidine 21 acts as the Proton acceptor in catalysis. TRNA is bound by residues phenylalanine 66, asparagine 68, and asparagine 114.

The protein belongs to the PTH family. Monomer.

Its subcellular location is the cytoplasm. It carries out the reaction an N-acyl-L-alpha-aminoacyl-tRNA + H2O = an N-acyl-L-amino acid + a tRNA + H(+). Functionally, hydrolyzes ribosome-free peptidyl-tRNAs (with 1 or more amino acids incorporated), which drop off the ribosome during protein synthesis, or as a result of ribosome stalling. In terms of biological role, catalyzes the release of premature peptidyl moieties from peptidyl-tRNA molecules trapped in stalled 50S ribosomal subunits, and thus maintains levels of free tRNAs and 50S ribosomes. This is Peptidyl-tRNA hydrolase from Geotalea daltonii (strain DSM 22248 / JCM 15807 / FRC-32) (Geobacter daltonii).